The primary structure comprises 678 residues: DNA ligase (678 aa).

NAD(+) contacts are provided by residues D35–D39, S84–L85, and E115. The active-site N6-AMP-lysine intermediate is K117. NAD(+) contacts are provided by R138, E172, K288, and K312. C406, C409, C425, and C430 together coordinate Zn(2+). One can recognise a BRCT domain in the interval V589–F678.

It belongs to the NAD-dependent DNA ligase family. LigA subfamily. Mg(2+) is required as a cofactor. Requires Mn(2+) as cofactor.

It catalyses the reaction NAD(+) + (deoxyribonucleotide)n-3'-hydroxyl + 5'-phospho-(deoxyribonucleotide)m = (deoxyribonucleotide)n+m + AMP + beta-nicotinamide D-nucleotide.. Its function is as follows. DNA ligase that catalyzes the formation of phosphodiester linkages between 5'-phosphoryl and 3'-hydroxyl groups in double-stranded DNA using NAD as a coenzyme and as the energy source for the reaction. It is essential for DNA replication and repair of damaged DNA. This chain is DNA ligase, found in Pseudothermotoga lettingae (strain ATCC BAA-301 / DSM 14385 / NBRC 107922 / TMO) (Thermotoga lettingae).